Consider the following 359-residue polypeptide: Type-1 angiotensin II receptor (359 aa).

The Extracellular segment spans residues 1–25; the sequence is MILNSSTEDGIKRIQDDCPKAGRHS. An N-linked (GlcNAc...) asparagine glycan is attached at N4. The angiotensin II site is built by Q15 and D17. Disulfide bonds link C18–C274 and C101–C180. A helical membrane pass occupies residues 26 to 55; it reads YIFVMIPTLYSIIFVVGIFGNSLVVIVIYF. Residues 56-61 are Cytoplasmic-facing; the sequence is YMKLKT. A helical transmembrane segment spans residues 62–89; it reads VASVFLLNLALADICFLLTLPLWAVYTA. Topologically, residues 90–98 are extracellular; that stretch reads MEYRWPFGN. A helical membrane pass occupies residues 99–125; sequence YLCKIASASVSFNLYASVFLLTCLSID. The Cytoplasmic segment spans residues 126–141; that stretch reads RYLAIVHPMKSRLRRT. The chain crosses the membrane as a helical span at residues 142-165; sequence MLVAKVTCVIIWLMAGLASLPAVI. The Extracellular portion of the chain corresponds to 166–190; that stretch reads HRNVFFIENTNITVCAFHYESQNST. R167 provides a ligand contact to angiotensin II. Residue N176 is glycosylated (N-linked (GlcNAc...) asparagine). Angiotensin II is bound by residues F182, H183, and Y184. N-linked (GlcNAc...) asparagine glycosylation is present at N188. Residues 191–216 traverse the membrane as a helical segment; the sequence is LPIGLGLTKNILGFMFPFLIILTSYT. K199 contributes to the angiotensin II binding site. Residues 217-239 are Cytoplasmic-facing; the sequence is LIWKALKKAYEIQKNKPRNDDIF. The helical transmembrane segment at 240–268 threads the bilayer; the sequence is KIIMAIVLFFFFSWVPHQIFTFLDVLIQL. The Extracellular segment spans residues 269–278; it reads GIIHDCKISD. A helical membrane pass occupies residues 279–304; the sequence is IVDTAMPITICIAYFNNCLNPLFYGF. Residues 305–359 lie on the Cytoplasmic side of the membrane; that stretch reads LGKKFKKYFLQLLKYIPPKAKSHSTLSTKMSTLSYRPSDNVSSSAKKPVQCFEVE. Residues 337 to 349 are compositionally biased toward polar residues; it reads LSYRPSDNVSSSA. The segment at 337–359 is disordered; sequence LSYRPSDNVSSSAKKPVQCFEVE. C355 carries S-palmitoyl cysteine lipidation.

Belongs to the G-protein coupled receptor 1 family. Interacts with MAS1. Interacts with ARRB1. Interacts with FLNA (via filamin repeat 21); increases PKA-mediated phosphorylation of FLNA. In terms of processing, C-terminal Ser or Thr residues may be phosphorylated. As to expression, expressed in liver, kidney, adrenal gland, heart and colon.

It localises to the cell membrane. Receptor for angiotensin II, a vasoconstricting peptide, which acts as a key regulator of blood pressure and sodium retention by the kidney. The activated receptor in turn couples to G-alpha proteins G(q) (GNAQ, GNA11, GNA14 or GNA15) and thus activates phospholipase C and increases the cytosolic Ca(2+) concentrations, which in turn triggers cellular responses such as stimulation of protein kinase C. This Cavia porcellus (Guinea pig) protein is Type-1 angiotensin II receptor (AGTR1).